The chain runs to 429 residues: Integral membrane protein GPR137C (429 aa).

A compositionally biased stretch (low complexity) spans 1–17; it reads MRVSVPGPAAAAAPAAG. A disordered region spans residues 1 to 29; sequence MRVSVPGPAAAAAPAAGREPSTPGGGSGG. Over 1-48 the chain is Lumenal; it reads MRVSVPGPAAAAAPAAGREPSTPGGGSGGGGAVAAASGAAVPGSVQLA. A helical transmembrane segment spans residues 49–69; it reads LSVLHALLYAALFAFAYLQLW. Over 70 to 83 the chain is Cytoplasmic; sequence RLLLYRERRLSYQS. A helical transmembrane segment spans residues 84 to 104; the sequence is LCLFLCLLWAALRTTLFSAAF. At 105–120 the chain is on the lumenal side; sequence SLSGSLPLLRPPAHLH. Residues 121 to 141 traverse the membrane as a helical segment; it reads FFPHWLLYCFPSCLQFSTLCL. The Cytoplasmic portion of the chain corresponds to 142-167; the sequence is LNLYLAEVICKVRCATELDRHKILLH. Residues 168–188 traverse the membrane as a helical segment; that stretch reads LGFIMASLLFLVVNLTCAMLV. Over 189–205 the chain is Lumenal; the sequence is HGDVPENQLKWTVFVRA. A helical transmembrane segment spans residues 206–226; the sequence is LINDSLFILCAISLVCYICKI. At 227 to 246 the chain is on the cytoplasmic side; it reads TKMSSANVYLESKGMSLCQT. The chain crosses the membrane as a helical span at residues 247–267; the sequence is VVVGSVVILLYSSRACYNLVV. Residues 268–300 lie on the Lumenal side of the membrane; sequence VTISQDTLESPFNYGWDNLSDKAHVEDISGEEY. N-linked (GlcNAc...) asparagine glycosylation is present at N285. Residues 301–321 traverse the membrane as a helical segment; the sequence is IVFGMVLFLWEHVPAWSVVLF. Residues 322–429 are Cytoplasmic-facing; the sequence is FRAQRLNQNL…HHSLYVTPQN (108 aa).

This sequence belongs to the GPR137 family.

Its subcellular location is the lysosome membrane. In terms of biological role, lysosomal integral membrane protein that may regulate MTORC1 complex translocation to lysosomes. The chain is Integral membrane protein GPR137C (GPR137C) from Homo sapiens (Human).